A 214-amino-acid chain; its full sequence is Calcineurin B-like protein 8 (214 aa).

EF-hand domains follow at residues 35–70, 71–106, 108–143, and 152–187; these read EIEA…RNGS, MQNL…FHPY, PEHE…LLGE, and SIEA…NPSI. Residues Asp-165, Asn-167, Asp-169, Lys-171, and Glu-176 each coordinate Ca(2+). Ser-205 is modified (phosphoserine).

The protein belongs to the calcineurin regulatory subunit family. As to quaternary structure, interacts with CIPK23. Interacts with CIPK14 at the cell membrane exclusively.

Its subcellular location is the cytoplasm. The protein localises to the nucleus. It is found in the cell membrane. Acts as a calcium sensor. CBL proteins interact with CIPK serine-threonine protein kinases. Binding of a CBL protein to the regulatory NAF domain of a CIPK protein lead to the activation of the kinase in a calcium-dependent manner. The chain is Calcineurin B-like protein 8 (CBL8) from Arabidopsis thaliana (Mouse-ear cress).